The primary structure comprises 334 residues: MAKMLKLWRLVLLAAFSLLLMAARMPDMKVVPWQQVEVPTQNILLDIAFTGTNPSHGWLVGDKATLLESQDGGLHWQVRKLTALEPEAYLSSISFAGAEGWVVGQPRILLHTLNEGSDWTSIRLSKQLPGEPILIQALGPGAAEMVTNVGAIYRTEDGGQTWHAQVEEPIGAIKNIARGPGGEYLAVSSRGSFYFLYTPESRSWKPYPRESSRRIQNMGFGPNGSAWKLNQGAEIAFTSDFTSGEWSKPLRPGRALSFGYLNAAYQNDHDLWVVGGGGTLIHSPDGGKTWEEAKKLSNIPANFYSIEFFGPDRGFILGQRGTLLRYVGYSNSPS.

A signal peptide spans 1 to 22; it reads MAKMLKLWRLVLLAAFSLLLMA.

It belongs to the Ycf48 family. In terms of assembly, part of early PSII assembly complexes which includes D1 (psbA) and PsbI; not found in mature PSII. Binds to the lumenal side of PSII complexes. Interacts with YidC.

The protein localises to the cellular thylakoid lumen. In terms of biological role, a factor required for optimal assembly of photosystem II (PSII), acting in the early stages of PSII assembly. Also plays a role in replacement of photodamaged D1 (psbA). Assists YidC in synthesis of chlorophyll-binding proteins. This is Photosystem II assembly protein Ycf48 from Synechococcus sp. (strain JA-3-3Ab) (Cyanobacteria bacterium Yellowstone A-Prime).